We begin with the raw amino-acid sequence, 400 residues long: Probable vacuolar protease A (400 aa).

An N-terminal signal peptide occupies residues 1–18 (MKGSLLLAGATLLGCTSA). Positions 19-72 (KLHSLKLKKVSLKEQLEHADIDVQIKSLGQKYMGIRPEQHEQQMFKEQTPIEAE) are cleaved as a propeptide — activation peptide. The Peptidase A1 domain occupies 87-397 (YFSEISIGTP…DLGKGTVGLA (311 aa)). The active site involves aspartate 105. The cysteines at positions 118 and 123 are disulfide-linked. Asparagine 140 is a glycosylation site (N-linked (GlcNAc...) asparagine). Residue aspartate 289 is part of the active site. Cysteines 323 and 356 form a disulfide. Asparagine 340 carries N-linked (GlcNAc...) asparagine glycosylation.

This sequence belongs to the peptidase A1 family.

The protein localises to the vacuole lumen. Its subcellular location is the secreted. The catalysed reaction is Hydrolysis of proteins with broad specificity for peptide bonds. Cleaves -Leu-Leu-|-Val-Tyr- bond in a synthetic substrate. Does not act on esters of Tyr or Arg.. Vacuolar aspartic endopeptidase which is probably also secreted and contributes to virulence. The polypeptide is Probable vacuolar protease A (PEP2) (Trichophyton verrucosum (strain HKI 0517)).